A 184-amino-acid chain; its full sequence is Ribosome-recycling factor (184 aa).

This sequence belongs to the RRF family.

Its subcellular location is the cytoplasm. Responsible for the release of ribosomes from messenger RNA at the termination of protein biosynthesis. May increase the efficiency of translation by recycling ribosomes from one round of translation to another. The polypeptide is Ribosome-recycling factor (Acinetobacter baumannii (strain AB307-0294)).